A 352-amino-acid polypeptide reads, in one-letter code: GTPase Obg (352 aa).

The 159-residue stretch at 1–159 (MSFIDEAKVF…FPIFMQLKVL (159 aa)) folds into the Obg domain. Residues 160-327 (SDIGIIGMPN…VMLYEMLQKD (168 aa)) form the OBG-type G domain. GTP contacts are provided by residues 166 to 173 (GMPNAGKS), 191 to 195 (FTTLE), 212 to 215 (DIPG), 279 to 282 (NKCD), and 308 to 310 (SLD). Residues Ser173 and Thr193 each contribute to the Mg(2+) site.

The protein belongs to the TRAFAC class OBG-HflX-like GTPase superfamily. OBG GTPase family. In terms of assembly, monomer. The cofactor is Mg(2+).

The protein resides in the cytoplasm. Functionally, an essential GTPase which binds GTP, GDP and possibly (p)ppGpp with moderate affinity, with high nucleotide exchange rates and a fairly low GTP hydrolysis rate. Plays a role in control of the cell cycle, stress response, ribosome biogenesis and in those bacteria that undergo differentiation, in morphogenesis control. The sequence is that of GTPase Obg from Anaplasma phagocytophilum (strain HZ).